The primary structure comprises 407 residues: tRNA (guanine(26)-N(2))-dimethyltransferase (407 aa).

One can recognise a Trm1 methyltransferase domain in the interval 10–400 (AVTHEGRSII…APWGEVLEAV (391 aa)). 4 residues coordinate S-adenosyl-L-methionine: Arg50, Arg82, Asp99, and Glu128.

This sequence belongs to the class I-like SAM-binding methyltransferase superfamily. Trm1 family.

The catalysed reaction is guanosine(26) in tRNA + 2 S-adenosyl-L-methionine = N(2)-dimethylguanosine(26) in tRNA + 2 S-adenosyl-L-homocysteine + 2 H(+). Functionally, dimethylates a single guanine residue at position 26 of a number of tRNAs using S-adenosyl-L-methionine as donor of the methyl groups. The protein is tRNA (guanine(26)-N(2))-dimethyltransferase of Aeropyrum pernix (strain ATCC 700893 / DSM 11879 / JCM 9820 / NBRC 100138 / K1).